A 977-amino-acid chain; its full sequence is Receptor protein-tyrosine kinase CEPR2 (977 aa).

Positions 1–31 (MSRRPDLLRGSVVATVAATFLLFIFPPNVES) are cleaved as a signal peptide. Residues 32 to 620 (TVEKQALFRF…NVKRNSSLDG (589 aa)) lie on the Extracellular side of the membrane. Asn-85 carries N-linked (GlcNAc...) asparagine glycosylation. 20 LRR repeats span residues 97–121 (LTKL…IVNC), 122–146 (KNLK…PLKS), 148–167 (EILD…WIGN), 168–192 (MNQL…SIGG), 193–217 (LKKL…IFDL), 219–241 (ALDT…ISRL), 242–265 (VNLT…IKNL), 266–288 (TRLR…ELGV), 290–312 (KELR…GFGD), 313–338 (LSHL…GRFS), 340–361 (LDTV…LCQN), 363–385 (KLQF…YGEC), 386–409 (KSLL…FWSL), 411–433 (LAKM…IGLS), 434–457 (TELS…LGRL), 458–481 (TNIE…VGDL), 482–504 (KELS…ELKN), 506–529 (VKLV…LSQI), 530–553 (ASLN…LVKL), and 555–576 (LSFI…LLAV). An N-linked (GlcNAc...) asparagine glycan is attached at Asn-128. The N-linked (GlcNAc...) asparagine glycan is linked to Asn-205. 3 N-linked (GlcNAc...) asparagine glycosylation sites follow: Asn-243, Asn-251, and Asn-264. N-linked (GlcNAc...) asparagine glycosylation is found at Asn-301 and Asn-325. N-linked (GlcNAc...) asparagine glycosylation is found at Asn-469 and Asn-491. Asn-615 carries an N-linked (GlcNAc...) asparagine glycan. The helical transmembrane segment at 621-641 (TLLFLALAIVVVVLVSGLFAL) threads the bilayer. The Cytoplasmic segment spans residues 642 to 977 (RYRVVKIREL…SQDTTGKITV (336 aa)). Positions 683–965 (LDEDHVIGSG…RKLDDADPCV (283 aa)) constitute a Protein kinase domain. ATP-binding positions include 689–697 (IGSGSAGKV) and Lys-712. The residue at position 801 (Tyr-801) is a Phosphotyrosine. Asp-814 (proton acceptor) is an active-site residue. The residue at position 846 (Ser-846) is a Phosphoserine. Tyr-854 and Tyr-861 each carry phosphotyrosine.

It belongs to the protein kinase superfamily. Ser/Thr protein kinase family. In terms of assembly, interacts with the root-derived peptide CEP1. Binds to the ammonium transporter AMT1-1. As to expression, expressed in mature leaves, primary roots, and the root tips of both primary and lateral roots.

The protein localises to the cell membrane. The catalysed reaction is L-tyrosyl-[protein] + ATP = O-phospho-L-tyrosyl-[protein] + ADP + H(+). Its function is as follows. Receptor kinase involved in the perception of C-terminally encoded plant signaling peptide (CEP) and subsequent regulation of root and shoot development. Together with CEPR1, mediates systemic nitrogen (N)-demand signaling upon the perception of root-derived peptides (e.g. CEP1) via the up-regulation of genes involved in N uptake and assimilation pathways. In Arabidopsis thaliana (Mouse-ear cress), this protein is Receptor protein-tyrosine kinase CEPR2.